The sequence spans 140 residues: Large ribosomal subunit protein bL17 (140 aa).

The tract at residues 120-140 (EDAKGQDSGPVMVDEDDFAEA) is disordered.

Belongs to the bacterial ribosomal protein bL17 family. Part of the 50S ribosomal subunit. Contacts protein L32.

In Erythrobacter litoralis (strain HTCC2594), this protein is Large ribosomal subunit protein bL17.